Here is a 1522-residue protein sequence, read N- to C-terminus: Paired amphipathic helix protein pst1 (1522 aa).

Residues 139-174 (TILSSTDSNIPRPGTVKSSASPFVPNQNPSAPPPPP) are disordered. The 71-residue stretch at 178–248 (RQLNVTDALS…QGFNTFLPPG (71 aa)) folds into the PAH 1 domain. A disordered region spans residues 307–339 (QSSASHPVLQPPAPSTLQFNPSPSPAAPSYPPV). Residues 328 to 337 (SPSPAAPSYP) show a composition bias toward pro residues. Residues 345–415 (QAADLDQAIN…EEFKRFLPDV (71 aa)) form the PAH 2 domain. Disordered stretches follow at residues 422–504 (ETQD…AFNV), 928–968 (AREN…DESS), and 1343–1522 (SGKA…KDDL). Positions 426 to 441 (KSTVVPQESATATPKR) are enriched in polar residues. The residue at position 442 (Ser-442) is a Phosphoserine. The segment covering 442–468 (SPSATPTSALPPIGKFAPPTTAKAQPA) has biased composition (low complexity). Phosphothreonine is present on Thr-446. Residues 504–576 (VPIAQNKNPS…NWLKDLVKYN (73 aa)) enclose the PAH 3 domain. Positions 928–960 (ARENRSSVKEDYVSESTERTPDASEIDEHISEH) are enriched in basic and acidic residues. The segment covering 1385-1398 (GKSSVTRGNKTNLK) has biased composition (polar residues). Residues 1403–1432 (RNNDDSSNKINLSEKEKEKESIEDEEKNRE) are compositionally biased toward basic and acidic residues. Phosphoserine is present on Ser-1443. The span at 1461 to 1474 (TSSHRPERSSEKKS) shows a compositional bias: basic and acidic residues. Residues 1478-1487 (VFTSVKQTAE) are compositionally biased toward polar residues. Positions 1488-1522 (NDADNEDDKTDMDDQTEETLDADNTMEEEPSKDDL) are enriched in acidic residues.

It localises to the nucleus. Has a role in modulating the nuclear import of TF1 virus-like particles. Essential for viability. The polypeptide is Paired amphipathic helix protein pst1 (pst1) (Schizosaccharomyces pombe (strain 972 / ATCC 24843) (Fission yeast)).